The chain runs to 140 residues: Iron sulfur cluster assembly protein 1 (140 aa).

This sequence belongs to the NifU family. As to quaternary structure, component of the core Fe-S cluster (ISC) assembly machinery. It depends on [2Fe-2S] cluster as a cofactor.

The protein localises to the mitosome matrix. It participates in cofactor biosynthesis; iron-sulfur cluster biosynthesis. Its function is as follows. Scaffold protein for the de novo synthesis of iron-sulfur (Fe-S) clusters within mitosomes, which is required for maturation of both [2Fe-2S] and [4Fe-4S] proteins. First, a [2Fe-2S] cluster is transiently assembled on the scaffold protein ISU1. In a second step, the cluster is released from ISU1, transferred to a glutaredoxin, followed by the formation of [2Fe-2S] proteins, the synthesis of [4Fe-4S] clusters and their target-specific insertion into the recipient apoproteins. Cluster assembly on ISU1 depends on the function of the cysteine desulfurase complex NFS1-ISD11, which serves as the sulfur donor for cluster synthesis, the iron-binding protein frataxin as the putative iron donor, and the electron transfer chain comprised of ferredoxin reductase and ferredoxin, which receive their electrons from NADH. In Encephalitozoon cuniculi (strain GB-M1) (Microsporidian parasite), this protein is Iron sulfur cluster assembly protein 1 (ISU1).